Consider the following 220-residue polypeptide: MESLFGRRKTPEEMLRQNQRALNRAMRDLDRERQRLEQQEKKIIADIKKMAKQGQMDAVKIMAKDLVRTRRYVKKFIMMRANIQAVSLKIQTLKSNNSMAQAMKGVTKAMATMNRQLKLPQIQKIMMEFERQSEIMDMKEEMMNDAIDDAMGDEDDEEESDAVVSQVLDELGLTLSDELSNLPATGGSLSVAAGKKAEPQPTLADADADLEERLNNLRRD.

A coiled-coil region spans residues 12–53; sequence EEMLRQNQRALNRAMRDLDRERQRLEQQEKKIIADIKKMAKQ. The interval 184 to 220 is disordered; sequence ATGGSLSVAAGKKAEPQPTLADADADLEERLNNLRRD. The short motif at 208–218 is the MIT-interacting motif element; the sequence is ADLEERLNNLR. Positions 211–220 are enriched in basic and acidic residues; it reads EERLNNLRRD.

The protein belongs to the SNF7 family. Probable core component of the endosomal sorting required for transport complex III (ESCRT-III). ESCRT-III components are thought to multimerize to form a flat lattice on the perimeter membrane of the endosome.

The protein resides in the late endosome membrane. The protein localises to the cytoplasm. In terms of biological role, probable core component of the endosomal sorting required for transport complex III (ESCRT-III) which is involved in multivesicular bodies (MVBs) formation and sorting of endosomal cargo proteins into MVBs. MVBs contain intraluminal vesicles (ILVs) that are generated by invagination and scission from the limiting membrane of the endosome and mostly are delivered to lysosomes enabling degradation of membrane proteins, such as stimulated growth factor receptors, lysosomal enzymes and lipids. This Danio rerio (Zebrafish) protein is Charged multivesicular body protein 2a (chmp2a).